The sequence spans 1207 residues: Protein STU1 (1207 aa).

Disordered stretches follow at residues 504–525, 549–730, 789–856, 869–928, and 1086–1105; these read EKTALEKDPNNPNASLASSQSS, EQRR…DEDL, AQSI…EGVQ, AVEH…LYSE, and SSTPTSSPSSKSSLTSLPGA. A compositionally biased stretch (low complexity) spans 576 to 594; the sequence is SASTKSLSARTASTASTAS. Polar residues-rich tracts occupy residues 605 to 624, 653 to 672, and 684 to 710; these read SGESTKSALKNSSGTGSLMS, GKTTPSMTPEKTPAVTTTKK, and AQTQNSPNVSPIRSRSRLGQSTTVQKT. 2 stretches are compositionally biased toward low complexity: residues 711–724 and 791–806; these read ASASSRQASPAPSA and SIHHTPPKTHSPSHLS. Basic and acidic residues predominate over residues 869–878; sequence AVEHEVEKPV. Composition is skewed to polar residues over residues 895–905 and 919–928; these read NESISSDTVMG and TSTGSVLYSE.

This sequence belongs to the CLASP family. As to quaternary structure, interacts with microtubules.

The protein localises to the cytoplasm. The protein resides in the cytoskeleton. It localises to the nucleus. Its subcellular location is the spindle. Functionally, microtubule binding protein that promotes the stabilization of dynamic microtubules. Required for mitotic spindle formation. In Phaeosphaeria nodorum (strain SN15 / ATCC MYA-4574 / FGSC 10173) (Glume blotch fungus), this protein is Protein STU1 (STU1).